The sequence spans 419 residues: MECNAKPPFQWELENLISFGTSTAEVPRKLKPMEWEIDGFDCTSLYSSSFAYAGSSGSDIAHAFSKSSKSTSISSSSAEVRTHNFTSETGESLPGEFAKGIDTSPSLELSFGSGDPVLGLKLGKRTYFEDFWEVENAKGLGLPVTLASSSVSPVKKSKSIPQRLQTPHCQVEGCNLDLSSAKDYHRKHRICENHSKFPKVVVSGVERRFCQQCSRFHCLSEFDEKKRSCRRRLSDHNARRRKPNPGRTYDGKPQVDFVWNRFALIHPRSEEKFIWPSSKHVPSRVLMPQPAKTEISDTEHNRFGLLDPKTKTARAELFSKEKVTISSHMGASQDLDGALSLLSNSTTWVSSSDQPRRFTLDHHPSSNLQPVAHRSAAQLNSVSGYWQPDPPAVEGPTALHRNGVGQFNENYFSLNQFYN.

Residues 77-96 form a disordered region; sequence SAEVRTHNFTSETGESLPGE. Residues 166 to 243 form an SBP-type zinc finger; the sequence is TPHCQVEGCN…SDHNARRRKP (78 aa). Cys-169, Cys-174, Cys-191, His-194, Cys-210, Cys-213, His-217, and Cys-229 together coordinate Zn(2+). A Bipartite nuclear localization signal motif is present at residues 226-242; sequence KRSCRRRLSDHNARRRK. Residues 230-249 form a disordered region; the sequence is RRRLSDHNARRRKPNPGRTY.

Zn(2+) is required as a cofactor.

It is found in the nucleus. Its function is as follows. Trans-acting factor that binds specifically to the consensus nucleotide sequence 5'-TNCGTACAA-3'. The protein is Squamosa promoter-binding-like protein 2 (SPL2) of Arabidopsis thaliana (Mouse-ear cress).